A 398-amino-acid chain; its full sequence is Lipase member K (398 aa).

The N-terminal stretch at Met1–Gly19 is a signal peptide. An AB hydrolase-1 domain is found at Val78 to Gly377. Ser171 serves as the catalytic Nucleophile. A disulfide bridge connects residues Cys245 and Cys254. 2 N-linked (GlcNAc...) asparagine glycosylation sites follow: Asn270 and Asn326. Residues Asp342 and His371 each act as charge relay system in the active site.

Belongs to the AB hydrolase superfamily. Lipase family.

Its subcellular location is the secreted. Its function is as follows. Plays a highly specific role in the last step of keratinocyte differentiation. May have an essential function in lipid metabolism of the most differentiated epidermal layers. The polypeptide is Lipase member K (Lipk) (Mus musculus (Mouse)).